The sequence spans 112 residues: uncharacterized protein (112 aa).

The helical transmembrane segment at 75–95 threads the bilayer; sequence ILGVFGGFIYILTPLPIVSGF.

The protein localises to the membrane. This is an uncharacterized protein from Methanocaldococcus jannaschii (strain ATCC 43067 / DSM 2661 / JAL-1 / JCM 10045 / NBRC 100440) (Methanococcus jannaschii).